The following is a 118-amino-acid chain: NLYQFKNMIHCTVPSRPWWHFADYGCYCGRGGKGTAVDDLDRCCQVHDNCYGEAEKLGCWPYLTLYKYECSQGKLTCSGGNNKCAAAVCNCDLVAANCFAGARYIDANYNINLKERCQ.

7 disulfides stabilise this stretch: C11/C70, C26/C117, C28/C44, C43/C98, C50/C91, C59/C84, and C77/C89. Residues Y27, G29, and G31 each contribute to the Ca(2+) site. H47 is a catalytic residue. Position 48 (D48) interacts with Ca(2+). D92 is an active-site residue.

It belongs to the phospholipase A2 family. Group I subfamily. D49 sub-subfamily. Requires Ca(2+) as cofactor. Expressed by the venom gland.

It is found in the secreted. The catalysed reaction is a 1,2-diacyl-sn-glycero-3-phosphocholine + H2O = a 1-acyl-sn-glycero-3-phosphocholine + a fatty acid + H(+). Functionally, snake venom phospholipase A2 (PLA2) that causes myonecrosis when injected intramuscularly, causes neuromuscular blockade with a gradual contracture and a decreased sensitivity to ACh and KCl (in the chick biventer cervicis nerve-muscle preparation), abolishes twitches evoked by indirect stimulation earlier than those by direct stimulation (in the mouse phrenic nerve-diaphragm preparation), shows indirect hemolytic activity, and shows weak anticoagulant activity. PLA2 catalyzes the calcium-dependent hydrolysis of the 2-acyl groups in 3-sn-phosphoglycerides. The polypeptide is Basic phospholipase A2 CM-II (Naja mossambica (Mozambique spitting cobra)).